The primary structure comprises 432 residues: 3-phosphoshikimate 1-carboxyvinyltransferase (432 aa).

Residues Lys-21, Ser-22, and Arg-26 each coordinate 3-phosphoshikimate. Residue Lys-21 participates in phosphoenolpyruvate binding. Residues Gly-93 and Arg-121 each coordinate phosphoenolpyruvate. Residues Ser-166, Gln-168, Asp-318, and Lys-345 each coordinate 3-phosphoshikimate. Gln-168 contacts phosphoenolpyruvate. The Proton acceptor role is filled by Asp-318. Phosphoenolpyruvate is bound by residues Arg-349 and Arg-391.

It belongs to the EPSP synthase family. As to quaternary structure, monomer.

Its subcellular location is the cytoplasm. It catalyses the reaction 3-phosphoshikimate + phosphoenolpyruvate = 5-O-(1-carboxyvinyl)-3-phosphoshikimate + phosphate. Its pathway is metabolic intermediate biosynthesis; chorismate biosynthesis; chorismate from D-erythrose 4-phosphate and phosphoenolpyruvate: step 6/7. Its function is as follows. Catalyzes the transfer of the enolpyruvyl moiety of phosphoenolpyruvate (PEP) to the 5-hydroxyl of shikimate-3-phosphate (S3P) to produce enolpyruvyl shikimate-3-phosphate and inorganic phosphate. The chain is 3-phosphoshikimate 1-carboxyvinyltransferase from Persephonella marina (strain DSM 14350 / EX-H1).